Consider the following 792-residue polypeptide: Endonuclease MutS2 (792 aa).

335-342 (GPNTGGKT) is a binding site for ATP. In terms of domain architecture, Smr spans 717–792 (VDLRGLNLEE…GAGVTIVKLK (76 aa)).

The protein belongs to the DNA mismatch repair MutS family. MutS2 subfamily. Homodimer. Binds to stalled ribosomes, contacting rRNA.

Functionally, endonuclease that is involved in the suppression of homologous recombination and thus may have a key role in the control of bacterial genetic diversity. Its function is as follows. Acts as a ribosome collision sensor, splitting the ribosome into its 2 subunits. Detects stalled/collided 70S ribosomes which it binds and splits by an ATP-hydrolysis driven conformational change. Acts upstream of the ribosome quality control system (RQC), a ribosome-associated complex that mediates the extraction of incompletely synthesized nascent chains from stalled ribosomes and their subsequent degradation. Probably generates substrates for RQC. The sequence is that of Endonuclease MutS2 from Clostridioides difficile (strain 630) (Peptoclostridium difficile).